The primary structure comprises 434 residues: uncharacterized protein (434 aa).

Lys-216 carries the N6-(pyridoxal phosphate)lysine modification.

This is an uncharacterized protein from Schizosaccharomyces pombe (strain 972 / ATCC 24843) (Fission yeast).